A 429-amino-acid chain; its full sequence is C4-dicarboxylate transport protein (429 aa).

The next 8 helical transmembrane spans lie at 3–23 (LTIFKSLYFQVLTAITLGVLL), 44–64 (LIKMIIAPVIFCTVVTGIAGM), 76–96 (IALLYFEIVSTIALLIGLLIV), 142–162 (IGAFASGNILQVLLFAVLFGF), 184–204 (VIFGIINMIMRLAPLGAFGAM), 222–242 (LIACFYLTCILFVVVVLGSIA), 326–346 (VIHQVTLLVVLLLSSKGAAGV), and 352–372 (IVLAATISAVGHLPLAGLALI).

Belongs to the dicarboxylate/amino acid:cation symporter (DAACS) (TC 2.A.23) family.

It is found in the cell inner membrane. Its function is as follows. Responsible for the transport of dicarboxylates such as succinate, fumarate, and malate from the periplasm across the membrane. The sequence is that of C4-dicarboxylate transport protein from Serratia proteamaculans (strain 568).